We begin with the raw amino-acid sequence, 486 residues long: Glutamate--tRNA ligase (486 aa).

A 'HIGH' region motif is present at residues 11 to 21 (PSPTGLLHIGN). The 'KMSKS' region signature appears at 255 to 259 (KLSKR). Lysine 258 provides a ligand contact to ATP.

Belongs to the class-I aminoacyl-tRNA synthetase family. Glutamate--tRNA ligase type 1 subfamily. In terms of assembly, monomer.

The protein resides in the cytoplasm. It catalyses the reaction tRNA(Glu) + L-glutamate + ATP = L-glutamyl-tRNA(Glu) + AMP + diphosphate. In terms of biological role, catalyzes the attachment of glutamate to tRNA(Glu) in a two-step reaction: glutamate is first activated by ATP to form Glu-AMP and then transferred to the acceptor end of tRNA(Glu). The protein is Glutamate--tRNA ligase of Streptococcus pneumoniae serotype 19F (strain G54).